A 280-amino-acid chain; its full sequence is Golgi phosphoprotein 3-like B (280 aa).

Residues 1–32 form a disordered region; the sequence is MTTLIRRGRRAEEGQERRADSEDSIKDKDEED. Basic and acidic residues predominate over residues 10 to 32; sequence RAEEGQERRADSEDSIKDKDEED. 4 residues coordinate a 1,2-diacyl-sn-glycero-3-phospho-(1D-myo-inositol 4-phosphate): W62, R71, R152, and R155. The interval 171-182 is beta-hairpin required for oligomerization; that stretch reads EKQNFLLFDMTT.

It belongs to the GOLPH3/VPS74 family. In terms of assembly, homooligomer.

Its subcellular location is the golgi apparatus. The protein localises to the golgi stack membrane. It localises to the trans-Golgi network membrane. Its function is as follows. Phosphatidylinositol-4-phosphate-binding protein that may play a role in the process of vesicle budding at the Golgi and anterograde transport to the plasma membrane. This chain is Golgi phosphoprotein 3-like B (golph3l-b), found in Xenopus laevis (African clawed frog).